The chain runs to 80 residues: Exodeoxyribonuclease 7 small subunit (80 aa).

Belongs to the XseB family. In terms of assembly, heterooligomer composed of large and small subunits.

The protein localises to the cytoplasm. The catalysed reaction is Exonucleolytic cleavage in either 5'- to 3'- or 3'- to 5'-direction to yield nucleoside 5'-phosphates.. In terms of biological role, bidirectionally degrades single-stranded DNA into large acid-insoluble oligonucleotides, which are then degraded further into small acid-soluble oligonucleotides. This is Exodeoxyribonuclease 7 small subunit from Pseudomonas paraeruginosa (strain DSM 24068 / PA7) (Pseudomonas aeruginosa (strain PA7)).